The following is a 392-amino-acid chain: Acyl-CoA dehydrogenase IpdE1 (392 aa).

Residues 126-129 (QGYS) and Ser171 each bind FAD. Glu254 functions as the Proton acceptor in the catalytic mechanism. 371–373 (SNE) contacts FAD.

The protein belongs to the acyl-CoA dehydrogenase family. Heterotetramer composed of 2 IpdE1 subunits and 2 IpdE2 subunits. It depends on FAD as a cofactor.

The enzyme catalyses 3-[(3aS,4S,5R,7aS)-5-hydroxy-7a-methyl-1-oxo-octahydro-1H-inden-4-yl]propanoyl-CoA + A = (2E)-3-[(3aS,4S,5R,7aS)-5-hydroxy-7a-methyl-1-oxo-octahydro-1H-inden-4-yl]prop-2-enoyl-CoA + AH2. Its pathway is steroid metabolism; cholesterol degradation. In terms of biological role, involved in cholesterol degradation. Catalyzes the dehydrogenation of 5OH-HIP-CoA to 5OH-HIPE-CoA. In Mycolicibacterium smegmatis (strain ATCC 700084 / mc(2)155) (Mycobacterium smegmatis), this protein is Acyl-CoA dehydrogenase IpdE1.